Consider the following 357-residue polypeptide: S-adenosylmethionine:tRNA ribosyltransferase-isomerase (357 aa).

The protein belongs to the QueA family. In terms of assembly, monomer.

It is found in the cytoplasm. It catalyses the reaction 7-aminomethyl-7-carbaguanosine(34) in tRNA + S-adenosyl-L-methionine = epoxyqueuosine(34) in tRNA + adenine + L-methionine + 2 H(+). The protein operates within tRNA modification; tRNA-queuosine biosynthesis. Its function is as follows. Transfers and isomerizes the ribose moiety from AdoMet to the 7-aminomethyl group of 7-deazaguanine (preQ1-tRNA) to give epoxyqueuosine (oQ-tRNA). This is S-adenosylmethionine:tRNA ribosyltransferase-isomerase from Buchnera aphidicola subsp. Acyrthosiphon pisum (strain APS) (Acyrthosiphon pisum symbiotic bacterium).